The primary structure comprises 142 residues: Putative pre-16S rRNA nuclease (142 aa).

The protein belongs to the YqgF nuclease family.

Its subcellular location is the cytoplasm. Functionally, could be a nuclease involved in processing of the 5'-end of pre-16S rRNA. This Ruminiclostridium cellulolyticum (strain ATCC 35319 / DSM 5812 / JCM 6584 / H10) (Clostridium cellulolyticum) protein is Putative pre-16S rRNA nuclease.